A 273-amino-acid polypeptide reads, in one-letter code: 2,3,4,5-tetrahydropyridine-2,6-dicarboxylate N-succinyltransferase (273 aa).

2 residues coordinate substrate: Arg-104 and Asp-141.

The protein belongs to the transferase hexapeptide repeat family. As to quaternary structure, homotrimer.

Its subcellular location is the cytoplasm. The enzyme catalyses (S)-2,3,4,5-tetrahydrodipicolinate + succinyl-CoA + H2O = (S)-2-succinylamino-6-oxoheptanedioate + CoA. It participates in amino-acid biosynthesis; L-lysine biosynthesis via DAP pathway; LL-2,6-diaminopimelate from (S)-tetrahydrodipicolinate (succinylase route): step 1/3. This Nitrosococcus oceani (strain ATCC 19707 / BCRC 17464 / JCM 30415 / NCIMB 11848 / C-107) protein is 2,3,4,5-tetrahydropyridine-2,6-dicarboxylate N-succinyltransferase.